The sequence spans 178 residues: Caveolin-1 (178 aa).

N-acetylserine is present on Ser-2. At Ser-2 the chain carries Phosphoserine. The tract at residues 2-94 is required for homooligomerization; sequence SGGKYVDSEG…WKASFTTFTV (93 aa). The Cytoplasmic segment spans residues 2 to 104; the sequence is SGGKYVDSEG…TKYWFYRLLS (103 aa). Position 5 is an N6-acetyllysine; alternate (Lys-5). Residue Lys-5 forms a Glycyl lysine isopeptide (Lys-Gly) (interchain with G-Cter in ubiquitin); alternate linkage. Tyr-6 is subject to Phosphotyrosine. Position 9 is a phosphoserine (Ser-9). The residue at position 14 (Tyr-14) is a Phosphotyrosine; by ABL1. Residue Tyr-25 is modified to Phosphotyrosine. Residues Lys-26, Lys-30, Lys-39, Lys-47, and Lys-57 each participate in a glycyl lysine isopeptide (Lys-Gly) (interchain with G-Cter in ubiquitin) cross-link. An interaction with CAVIN3 region spans residues 82-94; that stretch reads DGIWKASFTTFTV. The segment at residues 105 to 125 is an intramembrane region (helical); sequence ALFGIPMALIWGIYFAILSFL. Residues 126 to 178 are Cytoplasmic-facing; it reads HIWAVVPCIKSFLIEIQCISRVYSIYVHTFCDPLFEAIGKIFSNIRINMQKEI. Positions 131 to 142 are interacts with SPRY1, SPRY2, SPRY3 and SPRY4; the sequence is VPCIKSFLIEIQ. 3 S-palmitoyl cysteine lipidation sites follow: Cys-133, Cys-143, and Cys-156. The interacts with SPRY1, SPRY2, and SPRY4 stretch occupies residues 149–160; that stretch reads SIYVHTFCDPLF. The segment at 167–178 is interacts with SPRY1, SPRY2, SPRY3 and SPRY4; the sequence is FSNIRINMQKEI.

Belongs to the caveolin family. In terms of assembly, homooligomer. Interacts (via the N-terminus) with DPP4; the interaction is direct. Forms a stable heterooligomeric complex with CAV2 that targets to lipid rafts and drives caveolae formation. Interacts with PACSIN2; this interaction induces membrane tubulation. Interacts with BMX, BTK, CTNNB1, CDH1, GLIPR2, JUP, NOSTRIN, SNAP25 and STX1A. Interacts with SLC7A9. Interacts with TGFBR1. Interacts with CAVIN3 (via leucine-zipper domain) in a cholesterol-sensitive manner. Interacts with CAVIN1. Interacts with EHD2 in a cholesterol-dependent manner. Forms a ternary complex with UBXN6 and VCP; mediates CAV1 targeting to lysosomes for degradation. Interacts with ABCG1; this interaction regulates ABCG1-mediated cholesterol efflux. Interacts with NEU3; this interaction enhances NEU3 sialidase activity within caveola. Interacts (via C-terminus) with SPRY1, SPRY2 (via C-terminus), SPRY3, and SPRY4. Post-translationally, phosphorylated at Tyr-14 by ABL1 in response to oxidative stress. In terms of processing, ubiquitinated. Undergo monoubiquitination and multi- and/or polyubiquitination. Monoubiquitination of N-terminal lysines promotes integration in a ternary complex with UBXN6 and VCP which promotes oligomeric CAV1 targeting to lysosomes for degradation. Ubiquitinated by ZNRF1; leading to degradation and modulation of the TLR4-mediated immune response.

Its subcellular location is the golgi apparatus membrane. It localises to the cell membrane. The protein localises to the membrane. It is found in the caveola. The protein resides in the membrane raft. Its function is as follows. May act as a scaffolding protein within caveolar membranes. Forms a stable heterooligomeric complex with CAV2 that targets to lipid rafts and drives caveolae formation. Mediates the recruitment of CAVIN proteins (CAVIN1/2/3/4) to the caveolae. Interacts directly with G-protein alpha subunits and can functionally regulate their activity. Involved in the costimulatory signal essential for T-cell receptor (TCR)-mediated T-cell activation. Its binding to DPP4 induces T-cell proliferation and NF-kappa-B activation in a T-cell receptor/CD3-dependent manner. Recruits CTNNB1 to caveolar membranes and may regulate CTNNB1-mediated signaling through the Wnt pathway. Negatively regulates TGFB1-mediated activation of SMAD2/3 by mediating the internalization of TGFBR1 from membrane rafts leading to its subsequent degradation. Binds 20(S)-hydroxycholesterol (20(S)-OHC). In Otolemur garnettii (Small-eared galago), this protein is Caveolin-1 (CAV1).